Reading from the N-terminus, the 1555-residue chain is Pre-mRNA cleavage complex 2 protein Pcf11 (1555 aa).

Serine 2 is modified (N-acetylserine). Residues 14-142 enclose the CID domain; that stretch reads AREDACRDYQ…ALDVRVNSLD (129 aa). Phosphoserine; by WNK1 is present on serine 120. The residue at position 121 (threonine 121) is a Phosphothreonine; by WNK1. The interval 167–186 is disordered; the sequence is NKSPEEPSTPGTVVSSPSIS. A phosphoserine mark is found at serine 169 and serine 182. Residues 174–186 show a composition bias toward low complexity; that stretch reads STPGTVVSSPSIS. Residues 202–239 are a coiled coil; it reads QLIRQQLLAKQKQLLELQQKKLELELEQAKAQLAVSLS. Positions 266-648 are disordered; the sequence is VKAPHQVPVQ…QQQHRLSVDA (383 aa). Residue lysine 291 forms a Glycyl lysine isopeptide (Lys-Gly) (interchain with G-Cter in SUMO2) linkage. A compositionally biased stretch (basic and acidic residues) spans 307-317; the sequence is HGKDQSHRKEF. Over residues 320–333 the composition is skewed to polar residues; sequence NTLNQSDTKTSKTI. Residue lysine 328 forms a Glycyl lysine isopeptide (Lys-Gly) (interchain with G-Cter in SUMO2) linkage. 3 stretches are compositionally biased toward basic and acidic residues: residues 342-364, 380-421, and 427-442; these read KQEKSKSGEKITKKELDQLDSKS, HTKD…DVKE, and EKKDKDEHMKSSEHRL. Lysine 456 participates in a covalent cross-link: Glycyl lysine isopeptide (Lys-Gly) (interchain with G-Cter in SUMO2). The residue at position 459 (threonine 459) is a Phosphothreonine. A compositionally biased stretch (basic residues) spans 475 to 486; it reads STRKRSRSRSPK. Residues serine 489, serine 494, serine 509, and serine 511 each carry the phosphoserine modification. Residues 494–508 show a composition bias toward basic residues; that stretch reads SPKRRDRRSPKRRQR. The span at 529–567 shows a compositional bias: basic and acidic residues; it reads SHMEEFTPPSREDRNAKRSTKQDIRDPRRMKKTEEERPQ. Polar residues predominate over residues 568 to 578; it reads ETTNQHSTKSG. A compositionally biased stretch (basic and acidic residues) spans 599–615; it reads SGWEENKSLQQVDEHSK. The residue at position 645 (serine 645) is a Phosphoserine. A Glycyl lysine isopeptide (Lys-Gly) (interchain with G-Cter in SUMO2) cross-link involves residue lysine 654. The residue at position 705 (serine 705) is a Phosphoserine. Disordered regions lie at residues 707–732 and 749–781; these read FNDRFPLKRPRYEDSDKPFVDSPASR and RPLFDGPSRPSVARDGPTKMIFEGPNKLSPRID. The span at 716-725 shows a compositional bias: basic and acidic residues; that stretch reads PRYEDSDKPF. Lysine 723 is covalently cross-linked (Glycyl lysine isopeptide (Lys-Gly) (interchain with G-Cter in SUMO2)). Serine 728 and serine 777 each carry phosphoserine. Phosphothreonine is present on threonine 785. Position 794 is a phosphoserine (serine 794). An asymmetric dimethylarginine mark is found at arginine 805, arginine 820, and arginine 833. The residue at position 851 (serine 851) is a Phosphoserine. Asymmetric dimethylarginine is present on residues arginine 929, arginine 942, arginine 955, arginine 981, arginine 994, and arginine 1007. A disordered region spans residues 1056–1081; that stretch reads HGQPGPRFERTPGQPGPQRFDGPPGQ. 2 positions are modified to asymmetric dimethylarginine: arginine 1093 and arginine 1104. Disordered stretches follow at residues 1127–1147 and 1159–1187; these read VSFNQTGPYNDPPGNAFNAPS and FDSPQGPNFNGPHGPGNQSFSNPLNRASG. Serine 1161 carries the post-translational modification Phosphoserine. Positions 1162 to 1175 are enriched in low complexity; it reads PQGPNFNGPHGPGN. Residue lysine 1278 forms a Glycyl lysine isopeptide (Lys-Gly) (interchain with G-Cter in SUMO2) linkage. Over residues 1289–1298 the composition is skewed to polar residues; it reads SATTQVSEVT. Residues 1289-1315 are disordered; the sequence is SATTQVSEVTAQPPPEEEEDQNEDQDV. A compositionally biased stretch (acidic residues) spans 1303 to 1315; it reads PEEEEDQNEDQDV. Glycyl lysine isopeptide (Lys-Gly) (interchain with G-Cter in SUMO2) cross-links involve residues lysine 1419, lysine 1511, and lysine 1524. Positions 1516 to 1555 are disordered; it reads EPCDSPKVKEERIDTPPACTEESIATPSEIKTENDTVESV. Residues 1519–1529 show a composition bias toward basic and acidic residues; it reads DSPKVKEERID. The residue at position 1530 (threonine 1530) is a Phosphothreonine. Lysine 1546 is covalently cross-linked (Glycyl lysine isopeptide (Lys-Gly) (interchain with G-Cter in SUMO2)).

As to quaternary structure, associates with the phosphorylated CTD domain of POLR2A /RNA polymerase II. Post-translationally, phosphorylation at Ser-120 and/or Thr-121 by WNK1 weakens its association with POLR2A/RNA polymerase II, promoting transcript release from the chromatin template and mRNA export to the cytoplasm.

It localises to the nucleus. Component of pre-mRNA cleavage complex II, which promotes transcription termination by RNA polymerase II. This Homo sapiens (Human) protein is Pre-mRNA cleavage complex 2 protein Pcf11.